A 241-amino-acid chain; its full sequence is Pyridoxine 5'-phosphate synthase (241 aa).

3-amino-2-oxopropyl phosphate is bound at residue Asn-7. 9–10 provides a ligand contact to 1-deoxy-D-xylulose 5-phosphate; it reads DH. Residue Arg-18 coordinates 3-amino-2-oxopropyl phosphate. His-43 acts as the Proton acceptor in catalysis. 1-deoxy-D-xylulose 5-phosphate contacts are provided by Arg-45 and His-50. The active-site Proton acceptor is Glu-70. Thr-100 is a binding site for 1-deoxy-D-xylulose 5-phosphate. The active-site Proton donor is His-191. Residues Ser-192 and 213–214 each bind 3-amino-2-oxopropyl phosphate; that span reads GH.

The protein belongs to the PNP synthase family. As to quaternary structure, homooctamer; tetramer of dimers.

The protein resides in the cytoplasm. The catalysed reaction is 3-amino-2-oxopropyl phosphate + 1-deoxy-D-xylulose 5-phosphate = pyridoxine 5'-phosphate + phosphate + 2 H2O + H(+). The protein operates within cofactor biosynthesis; pyridoxine 5'-phosphate biosynthesis; pyridoxine 5'-phosphate from D-erythrose 4-phosphate: step 5/5. Its function is as follows. Catalyzes the complicated ring closure reaction between the two acyclic compounds 1-deoxy-D-xylulose-5-phosphate (DXP) and 3-amino-2-oxopropyl phosphate (1-amino-acetone-3-phosphate or AAP) to form pyridoxine 5'-phosphate (PNP) and inorganic phosphate. This is Pyridoxine 5'-phosphate synthase from Nitrosomonas eutropha (strain DSM 101675 / C91 / Nm57).